The primary structure comprises 403 residues: LIM/homeobox protein Lhx1 (403 aa).

2 LIM zinc-binding domains span residues 4–54 and 63–117; these read CAGC…CKND and CAGC…CKED. A compositionally biased stretch (polar residues) spans 131 to 147; the sequence is ISVTGSDPSLSPESQDP. 2 disordered regions span residues 131 to 185 and 318 to 366; these read ISVT…PRTT and PAGT…SMHS. Basic and acidic residues predominate over residues 150-166; sequence DDAKDSESANVSDKEAG. Positions 179–238 form a DNA-binding region, homeobox; the sequence is RRGPRTTIKAKQLETLKAAFAATPKPTRHIREQLAQETGLNMRVIQVWFQNRRSKERRMK.

As to quaternary structure, interacts with ldb1 via the tandem LIM domains. Both LIM domains are required for optimal binding and binding relieves the inhibitory effect of the LIM domains and activates lhx1. Binding to ldb1 also prevents degradation of ldb1 by rnf12. The stoichiometry of lhx1 and ldb1 is important for their function and an excess of ldb1 can inhibit lhx1 function. Interacts with the N-terminal region of rnf12 by a homeobox-dependent mechanism. In terms of tissue distribution, exhibits a biphasic expression pattern. Initially localized to the Spemann organizer region of gastrulae, leading to expression in prechordal mesoderm and notochord. In the second phase, expressed in the lateral mesoderm and neural plate, eventually concentrating in the pronephros and the CNS. Expressed in the pronephros primordium by late gastrula (stage 12.5) and becomes restricted to the tips of the tubules and ducts as kidney development progresses. In the CNS, becomes progressively recognizable in anatomically distinct structures during larval development. Within the forebrain, shows almost identical expression to lhx5 in the diencephalon, being expressed in alternating stripes to lhx2 and lhx9. Expressed in the diencephalic pretectum within prosomere 1, hypothalamus, ventral thalamus and zona limitans intrathalamica. In the telencephalon, the expression pattern is distinct from lhx5, being localized in the pallium and subpallium. Also expressed in the ventral territories of midbrain (mesencephalon) and hindbrain (rhombencephalon), being expressed in the mesencephalic tegmentum and hindbrain reticular formation. Also shows intense expression in the cerebellum including Purkinje cells.

It localises to the nucleus. Involved in the establishment of the body plan via the Spemann organizer during gastrulation. Transcriptional activator required to induce organizer gene expression downstream of siamois. Promotes head formation by binding to 5'-TAAT'-3' elements in the promoters of head organizer genes cer1 and gsc to stimulate expression. Binds as a complex with siamois and mix-A/mix.1 to the cer1 promoter, and with ldb1 and otx2 to the gsc promoter. Also involved in neural induction via the organizer, including a role in notochord formation. Acts synergistically with ldb1 and ssbp in subsequent axis formation. Involved in kidney development, acting synergistically with pax8 to establish the pronephric primordium in late gastrulae/early neurulae and with pax2 during pronephric morphogenesis in tailbud stages. Has a later role in mediating the activity of inhibitors of ventralization. This Xenopus laevis (African clawed frog) protein is LIM/homeobox protein Lhx1 (lhx1).